The sequence spans 1443 residues: Cleavage and polyadenylation specificity factor subunit 1 (1443 aa).

4 disordered regions span residues 404-435, 546-570, 715-777, and 901-921; these read PASA…AAGK, EEDN…DDGR, GGAR…PAPF, and FREK…AEEG. Positions 410-419 are enriched in basic and acidic residues; sequence EAADKEEPPS. Ser756 and Ser766 each carry phosphoserine. The span at 758–775 shows a compositional bias: basic and acidic residues; sequence SKEEARRSSQPPADRDPA. The Nuclear localization signal motif lies at 893 to 908; sequence KKVPHNINFREKKPKP.

Belongs to the CPSF1 family. In terms of assembly, component of the cleavage and polyadenylation specificity factor (CPSF) complex, composed of CPSF1, CPSF2, CPSF3, CPSF4 and FIP1L1. Found in a complex with CPSF1, FIP1L1 and PAPOLA. Interacts with FIP1L1, TENT2/GLD2 and SRRM1. Interacts with TUT1; the interaction is direct and mediates the recruitment of the CPSF complex on the 3'UTR of selected pre-mRNAs. Post-translationally, the N-terminus is blocked. As to expression, widely expressed, with high expression in the retina.

The protein localises to the nucleus. It localises to the nucleoplasm. Functionally, component of the cleavage and polyadenylation specificity factor (CPSF) complex that plays a key role in pre-mRNA 3'-end formation, recognizing the AAUAAA signal sequence and interacting with poly(A) polymerase and other factors to bring about cleavage and poly(A) addition. This subunit is involved in the RNA recognition step of the polyadenylation reaction. May play a role in eye morphogenesis and the development of retinal ganglion cell projections to the midbrain. This Homo sapiens (Human) protein is Cleavage and polyadenylation specificity factor subunit 1 (CPSF1).